Reading from the N-terminus, the 262-residue chain is ATP synthase subunit a (262 aa).

Transmembrane regions (helical) follow at residues 26–46, 86–106, 130–150, 204–226, and 240–260; these read VHIDTLFFSILAAVIFLFVFS, VAPLALTIFCWVFIMNAIDLI, DISATLGMSICVFFLILFYTI, LIFILIAVMYSANMAIAALGIPL, and LQAFIFMMLTVVYLSIAYNKA.

The protein belongs to the ATPase A chain family. As to quaternary structure, F-type ATPases have 2 components, CF(1) - the catalytic core - and CF(0) - the membrane proton channel. CF(1) has five subunits: alpha(3), beta(3), gamma(1), delta(1), epsilon(1). CF(0) has three main subunits: a(1), b(2) and c(9-12). The alpha and beta chains form an alternating ring which encloses part of the gamma chain. CF(1) is attached to CF(0) by a central stalk formed by the gamma and epsilon chains, while a peripheral stalk is formed by the delta and b chains.

It is found in the cell inner membrane. Key component of the proton channel; it plays a direct role in the translocation of protons across the membrane. The protein is ATP synthase subunit a of Haemophilus influenzae (strain 86-028NP).